The chain runs to 476 residues: Glycogen synthase (476 aa).

Position 15 (Lys-15) interacts with ADP-alpha-D-glucose.

Belongs to the glycosyltransferase 1 family. Bacterial/plant glycogen synthase subfamily.

The enzyme catalyses [(1-&gt;4)-alpha-D-glucosyl](n) + ADP-alpha-D-glucose = [(1-&gt;4)-alpha-D-glucosyl](n+1) + ADP + H(+). Its pathway is glycan biosynthesis; glycogen biosynthesis. Synthesizes alpha-1,4-glucan chains using ADP-glucose. This is Glycogen synthase from Streptococcus agalactiae serotype Ia (strain ATCC 27591 / A909 / CDC SS700).